The following is a 299-amino-acid chain: Protoheme IX farnesyltransferase 1 (299 aa).

Transmembrane regions (helical) follow at residues 25–45, 47–67, 95–115, 119–139, 147–167, 173–193, 217–237, 243–263, and 279–299; these read VVVL…RAGV, WSVL…AAVV, LPAL…LLAF, LTAW…TGFL, IVIG…AVSG, PLLL…ALAI, ALHI…PYAI, LYLA…WVLY, and IGYL…LLNL.

It belongs to the UbiA prenyltransferase family. Protoheme IX farnesyltransferase subfamily.

The protein localises to the cell inner membrane. The enzyme catalyses heme b + (2E,6E)-farnesyl diphosphate + H2O = Fe(II)-heme o + diphosphate. Its pathway is porphyrin-containing compound metabolism; heme O biosynthesis; heme O from protoheme: step 1/1. Converts heme B (protoheme IX) to heme O by substitution of the vinyl group on carbon 2 of heme B porphyrin ring with a hydroxyethyl farnesyl side group. The sequence is that of Protoheme IX farnesyltransferase 1 from Pseudomonas entomophila (strain L48).